Reading from the N-terminus, the 884-residue chain is Translation initiation factor IF-2 (884 aa).

The segment at 58–248 is disordered; it reads PEKVEQKRVR…GKTESVETEE (191 aa). The segment covering 66-77 has biased composition (basic residues); it reads VRSNVIRKRRQP. Residues 87 to 106 show a composition bias toward low complexity; that stretch reads EAPAAQAPEAEEVTAPTAEE. Positions 172–183 are enriched in basic residues; that stretch reads SRKKAKAKKHQA. Residues 207-223 show a composition bias toward low complexity; that stretch reads DTAPADSPAAPAAATPA. The span at 229–239 shows a compositional bias: basic residues; that stretch reads KPSRKDRKKRG. The tr-type G domain occupies 384–553; the sequence is KRAPVVTIMG…LLQAEMLELK (170 aa). A G1 region spans residues 393-400; sequence GHVDHGKT. 393–400 provides a ligand contact to GTP; it reads GHVDHGKT. The tract at residues 418–422 is G2; it reads GITQH. The tract at residues 439–442 is G3; it reads DTPG. Residues 439 to 443 and 493 to 496 contribute to the GTP site; these read DTPGH and NKID. Residues 493–496 form a G4 region; sequence NKID. The tract at residues 529-531 is G5; that stretch reads SAK.

It belongs to the TRAFAC class translation factor GTPase superfamily. Classic translation factor GTPase family. IF-2 subfamily.

The protein localises to the cytoplasm. In terms of biological role, one of the essential components for the initiation of protein synthesis. Protects formylmethionyl-tRNA from spontaneous hydrolysis and promotes its binding to the 30S ribosomal subunits. Also involved in the hydrolysis of GTP during the formation of the 70S ribosomal complex. The protein is Translation initiation factor IF-2 of Desulfosudis oleivorans (strain DSM 6200 / JCM 39069 / Hxd3) (Desulfococcus oleovorans).